Here is a 498-residue protein sequence, read N- to C-terminus: Capsanthin/capsorubin synthase, chromoplastic (498 aa).

The N-terminal 52 residues, 1 to 52, are a transit peptide targeting the chromoplast; sequence METLLKPFPSPLLSIPTPNMYSFKHNSTFPNPTKQKDSRKFHYRNKSSTHFC. Residue 84–112 participates in NAD(+) binding; sequence VIIIGTGPAGLRLAEQVSKYGIKVCCVDP. Residues 293 to 297 carry the FLEET motif motif; sequence FLEET.

Belongs to the lycopene cyclase family. As to quaternary structure, monomer. Requires FAD as cofactor. NADPH is required as a cofactor.

The protein localises to the plastid. The protein resides in the chromoplast. It carries out the reaction all-trans-violaxanthin = all-trans-capsorubin. It catalyses the reaction all-trans-antheraxanthin = all-trans-capsanthin. The enzyme catalyses all-trans-violaxanthin = (5R,6S)-5,6-epoxi-capsanthin. The catalysed reaction is (5R,6S)-5,6-epoxi-capsanthin = all-trans-capsorubin. It functions in the pathway carotenoid biosynthesis; capsanthin biosynthesis; capsanthin from antheraxanthin: step 1/1. Its pathway is carotenoid biosynthesis; capsorubin biosynthesis; capsorubin from violaxanthin: step 1/1. Functionally, catalyzes the conversion of the ubiquitous 5,6-epoxycarotenoids, antheraxanthin and violaxanthin, into capsanthin and capsorubin, respectively. The protein is Capsanthin/capsorubin synthase, chromoplastic of Capsicum annuum (Capsicum pepper).